The sequence spans 432 residues: 5-methylthioadenosine/S-adenosylhomocysteine deaminase (432 aa).

Positions 62 and 64 each coordinate Zn(2+). Positions 91 and 184 each coordinate substrate. His211 is a Zn(2+) binding site. Substrate-binding residues include Glu214 and Asp299. Residue Asp299 coordinates Zn(2+).

Belongs to the metallo-dependent hydrolases superfamily. MTA/SAH deaminase family. Zn(2+) is required as a cofactor.

The catalysed reaction is S-adenosyl-L-homocysteine + H2O + H(+) = S-inosyl-L-homocysteine + NH4(+). It catalyses the reaction S-methyl-5'-thioadenosine + H2O + H(+) = S-methyl-5'-thioinosine + NH4(+). Functionally, catalyzes the deamination of 5-methylthioadenosine and S-adenosyl-L-homocysteine into 5-methylthioinosine and S-inosyl-L-homocysteine, respectively. Is also able to deaminate adenosine. In Haloarcula marismortui (strain ATCC 43049 / DSM 3752 / JCM 8966 / VKM B-1809) (Halobacterium marismortui), this protein is 5-methylthioadenosine/S-adenosylhomocysteine deaminase.